A 325-amino-acid chain; its full sequence is Sensor histidine kinase YxdK (325 aa).

Residues 1–8 (MKLFLRSH) lie on the Cytoplasmic side of the membrane. The helical transmembrane segment at 9–29 (AVLILLFLLQGLFVFFYYWFA) threads the bilayer. Over 30-33 (GLHS) the chain is Extracellular. Residues 34–54 (FSHLFYILGVQLLILAGYLAY) traverse the membrane as a helical segment. The Cytoplasmic segment spans residues 55 to 325 (RWYKDRGVYH…SVRFSFLTKM (271 aa)). The Histidine kinase domain occupies 118–325 (QWVHQVKTPL…SVRFSFLTKM (208 aa)). The residue at position 121 (His121) is a Phosphohistidine; by autocatalysis.

Its subcellular location is the cell membrane. It catalyses the reaction ATP + protein L-histidine = ADP + protein N-phospho-L-histidine.. Functionally, probable member of the two-component regulatory system YxdK/YxdJ. May activate YxdJ in response to the antibacterial protein LL-37. This is Sensor histidine kinase YxdK (yxdK) from Bacillus subtilis (strain 168).